We begin with the raw amino-acid sequence, 338 residues long: Holliday junction branch migration complex subunit RuvB (338 aa).

Positions 1 to 180 are large ATPase domain (RuvB-L); it reads MERLLDNKFS…FGIIERLDYY (180 aa). Residues leucine 19, arginine 20, glycine 61, lysine 64, threonine 65, threonine 66, arginine 170, tyrosine 180, and arginine 217 each coordinate ATP. Threonine 65 serves as a coordination point for Mg(2+). The segment at 181-251 is small ATPAse domain (RuvB-S); sequence TVEELSQIVM…VAKSGLEMFE (71 aa). Positions 254-338 are head domain (RuvB-H); sequence EYGLDLVDRN…FNVKESGDKR (85 aa). Residues lysine 309 and arginine 314 each contribute to the DNA site.

It belongs to the RuvB family. In terms of assembly, homohexamer. Forms an RuvA(8)-RuvB(12)-Holliday junction (HJ) complex. HJ DNA is sandwiched between 2 RuvA tetramers; dsDNA enters through RuvA and exits via RuvB. An RuvB hexamer assembles on each DNA strand where it exits the tetramer. Each RuvB hexamer is contacted by two RuvA subunits (via domain III) on 2 adjacent RuvB subunits; this complex drives branch migration. In the full resolvosome a probable DNA-RuvA(4)-RuvB(12)-RuvC(2) complex forms which resolves the HJ.

The protein resides in the cytoplasm. It carries out the reaction ATP + H2O = ADP + phosphate + H(+). Its function is as follows. The RuvA-RuvB-RuvC complex processes Holliday junction (HJ) DNA during genetic recombination and DNA repair, while the RuvA-RuvB complex plays an important role in the rescue of blocked DNA replication forks via replication fork reversal (RFR). RuvA specifically binds to HJ cruciform DNA, conferring on it an open structure. The RuvB hexamer acts as an ATP-dependent pump, pulling dsDNA into and through the RuvAB complex. RuvB forms 2 homohexamers on either side of HJ DNA bound by 1 or 2 RuvA tetramers; 4 subunits per hexamer contact DNA at a time. Coordinated motions by a converter formed by DNA-disengaged RuvB subunits stimulates ATP hydrolysis and nucleotide exchange. Immobilization of the converter enables RuvB to convert the ATP-contained energy into a lever motion, pulling 2 nucleotides of DNA out of the RuvA tetramer per ATP hydrolyzed, thus driving DNA branch migration. The RuvB motors rotate together with the DNA substrate, which together with the progressing nucleotide cycle form the mechanistic basis for DNA recombination by continuous HJ branch migration. Branch migration allows RuvC to scan DNA until it finds its consensus sequence, where it cleaves and resolves cruciform DNA. The polypeptide is Holliday junction branch migration complex subunit RuvB (Caldicellulosiruptor saccharolyticus (strain ATCC 43494 / DSM 8903 / Tp8T 6331)).